Here is a 382-residue protein sequence, read N- to C-terminus: Polyadenylate-binding protein 5 (382 aa).

RRM domains lie at 18–96 (AALY…WSQP), 106–182 (GNIF…RFKF), 199–276 (TNVF…RAQK), and 302–378 (VPIY…LGQA).

It is found in the cytoplasm. In terms of biological role, binds the poly(A) tail of mRNA. May be involved in cytoplasmic regulatory processes of mRNA metabolism. Can probably bind to cytoplasmic RNA sequences other than poly(A) in vivo. In Gorilla gorilla gorilla (Western lowland gorilla), this protein is Polyadenylate-binding protein 5 (PABPC5).